The chain runs to 240 residues: Dihydromonapterin reductase (240 aa).

Tyrosine 152 acts as the Proton acceptor in catalysis.

It belongs to the short-chain dehydrogenases/reductases (SDR) family. FolM subfamily.

It catalyses the reaction (6S)-5,6,7,8-tetrahydrofolate + NADP(+) = 7,8-dihydrofolate + NADPH + H(+). It carries out the reaction 7,8-dihydromonapterin + NADPH + H(+) = 5,6,7,8-tetrahydromonapterin + NADP(+). Functionally, catalyzes the reduction of dihydromonapterin to tetrahydromonapterin. Also has lower activity with dihydrofolate. The polypeptide is Dihydromonapterin reductase (folM) (Shigella sonnei (strain Ss046)).